We begin with the raw amino-acid sequence, 836 residues long: DNA gyrase subunit A (836 aa).

The 467-residue stretch at 34-500 folds into the Topo IIA-type catalytic domain; it reads LPDARDGLKP…AGDVRDIEDI (467 aa). The active-site O-(5'-phospho-DNA)-tyrosine intermediate is Y122. The short motif at 527 to 533 is the GyrA-box element; that stretch reads QKRGGQG.

The protein belongs to the type II topoisomerase GyrA/ParC subunit family. In terms of assembly, heterotetramer, composed of two GyrA and two GyrB chains. In the heterotetramer, GyrA contains the active site tyrosine that forms a transient covalent intermediate with DNA, while GyrB binds cofactors and catalyzes ATP hydrolysis.

Its subcellular location is the cytoplasm. It carries out the reaction ATP-dependent breakage, passage and rejoining of double-stranded DNA.. A type II topoisomerase that negatively supercoils closed circular double-stranded (ds) DNA in an ATP-dependent manner to modulate DNA topology and maintain chromosomes in an underwound state. Negative supercoiling favors strand separation, and DNA replication, transcription, recombination and repair, all of which involve strand separation. Also able to catalyze the interconversion of other topological isomers of dsDNA rings, including catenanes and knotted rings. Type II topoisomerases break and join 2 DNA strands simultaneously in an ATP-dependent manner. This is DNA gyrase subunit A from Chlamydia trachomatis serovar D (strain ATCC VR-885 / DSM 19411 / UW-3/Cx).